The sequence spans 935 residues: ABC transporter A family member 7 (935 aa).

Transmembrane regions (helical) follow at residues 34–54, 338–358, 392–412, 424–444, 454–474, 483–503, and 528–548; these read LIMIPFYLCILLVIIQILFDT, IASLIGPLFFTWVILLLFPVI, FLTISVLYVICLMIFGSAIGL, FVFYFLYLNLQIALAFLVSSV, ASYIYVFGSGLLGLFLLNFLI, WIIVMELYPGFSLYRGLYELA, and DDVFYIIVVEWFLALIAAYYI. Positions 571 to 591 are disordered; that stretch reads SLRRPSLQRQGSKVSVDMEKP. An ABC transporter domain is found at 613 to 850; the sequence is IVCDNLKKVY…YGGSYVFTMT (238 aa). Residue 651 to 658 coordinates ATP; the sequence is GPNGAGKT.

The protein belongs to the ABC transporter superfamily. ABCA family. CPR flippase (TC 3.A.1.211) subfamily.

The protein resides in the membrane. The protein is ABC transporter A family member 7 (ABCA7) of Arabidopsis thaliana (Mouse-ear cress).